The chain runs to 604 residues: uncharacterized protein (604 aa).

An ABC transmembrane type-1 domain is found at 49–332; the sequence is LILVMLMVVI…LANQFNTMLS (284 aa). 4 helical membrane passes run 50–70, 86–106, 172–192, and 288–308; these read ILVMLMVVISAIFGLLGPFVI, LIPVLLLLLAIYIIQSLSLWF, VITFVGTIAVMLYMSPLLTLI, and IAAIGGLFALKGWISIGSIVV. Positions 366–600 constitute an ABC transporter domain; it reads IEFRDVSFGY…KGFYSDLYES (235 aa). 399–406 serves as a coordination point for ATP; it reads GPTGAGKT. Residues 510 to 530 form a helical membrane-spanning segment; it reads LISIARAVLADPVLLILDEAT.

Belongs to the ABC transporter superfamily.

The protein localises to the cell membrane. This is an uncharacterized protein from Bacillus subtilis (strain 168).